The following is a 129-amino-acid chain: Venom CUB domain-containing protein 1 (129 aa).

The N-terminal stretch at 1-18 (MKLLGVLITIYCIASTLA) is a signal peptide. A CUB domain is found at 19 to 121 (IDVNVPSNGM…KASCKAYSIT (103 aa)). Cys66 and Cys83 are oxidised to a cystine.

This sequence belongs to the venom CUB family. Contains 2 disulfide bonds. In terms of tissue distribution, expressed by the venom gland.

The protein localises to the secreted. The sequence is that of Venom CUB domain-containing protein 1 from Platymeris rhadamanthus (Red spot assassin bug).